The chain runs to 360 residues: Histidinol-phosphate aminotransferase (360 aa).

The residue at position 208 (Lys-208) is an N6-(pyridoxal phosphate)lysine.

Belongs to the class-II pyridoxal-phosphate-dependent aminotransferase family. Histidinol-phosphate aminotransferase subfamily. As to quaternary structure, homodimer. It depends on pyridoxal 5'-phosphate as a cofactor.

The enzyme catalyses L-histidinol phosphate + 2-oxoglutarate = 3-(imidazol-4-yl)-2-oxopropyl phosphate + L-glutamate. The protein operates within amino-acid biosynthesis; L-histidine biosynthesis; L-histidine from 5-phospho-alpha-D-ribose 1-diphosphate: step 7/9. This Lactococcus lactis subsp. lactis (strain IL1403) (Streptococcus lactis) protein is Histidinol-phosphate aminotransferase (hisC).